The following is a 325-amino-acid chain: ATPase ASNA1 homolog 2 (325 aa).

22 to 29 (KGGVGKTT) is an ATP binding site. Asp-51 is an active-site residue. Positions 231 and 258 each coordinate ATP. 2 residues coordinate Zn(2+): Cys-267 and Cys-270.

The protein belongs to the arsA ATPase family. Homodimer.

Its subcellular location is the cytoplasm. The protein resides in the endoplasmic reticulum. In terms of biological role, ATPase required for the post-translational delivery of tail-anchored (TA) proteins to the endoplasmic reticulum. Recognizes and selectively binds the transmembrane domain of TA proteins in the cytosol. This complex then targets to the endoplasmic reticulum by membrane-bound receptors, where the tail-anchored protein is released for insertion. This process is regulated by ATP binding and hydrolysis. ATP binding drives the homodimer towards the closed dimer state, facilitating recognition of newly synthesized TA membrane proteins. ATP hydrolysis is required for insertion. Subsequently, the homodimer reverts towards the open dimer state, lowering its affinity for the membrane-bound receptor, and returning it to the cytosol to initiate a new round of targeting. In Paramecium tetraurelia, this protein is ATPase ASNA1 homolog 2.